The primary structure comprises 377 residues: GDP-mannose 3,5-epimerase (377 aa).

An N-acetylglycine modification is found at glycine 2. NAD(+) is bound by residues 34-60 (GAGGFIASHIARRLKHEGHYVIASDWK), aspartate 58, and aspartate 78. Substrate is bound by residues glycine 103 and 143–145 (SAC). Residues tyrosine 174 and lysine 178 each contribute to the NAD(+) site. The active-site Proton acceptor is the tyrosine 174. Residues asparagine 203, 216-218 (EKA), lysine 225, 241-243 (QTR), arginine 306, and serine 356 each bind substrate. A Phosphoserine modification is found at serine 369.

It belongs to the NAD(P)-dependent epimerase/dehydratase family. In terms of assembly, homodimer. Interacts with chaperone Hsc70-3 protein, which may regulate epimerase activity. It depends on NAD(+) as a cofactor.

The enzyme catalyses GDP-alpha-D-mannose = GDP-beta-L-gulose. It carries out the reaction GDP-beta-L-gulose = GDP-beta-L-galactose. It functions in the pathway cofactor biosynthesis; L-ascorbate biosynthesis via GDP-alpha-D-mannose pathway; L-ascorbate from GDP-alpha-D-mannose: step 1/5. Its activity is regulated as follows. Inhibited by GDP and GDP-D-glucose. Catalyzes a reversible epimerization of GDP-D-mannose that precedes the committed step in the biosynthesis of vitamin C (L-ascorbate), resulting in the hydrolysis of the highly energetic glycosyl-pyrophosphoryl linkage. Able to catalyze 2 distinct epimerization reactions and can release both GDP-L-galactose and GDP-L-gulose from GDP-mannose. This is GDP-mannose 3,5-epimerase from Arabidopsis thaliana (Mouse-ear cress).